The following is a 57-amino-acid chain: Large ribosomal subunit protein bL32 (57 aa).

A disordered region spans residues 1–23 (MAVPARHTSSAKKNRRRTHYKLT). A compositionally biased stretch (basic residues) spans 9 to 20 (SSAKKNRRRTHY).

This sequence belongs to the bacterial ribosomal protein bL32 family.

This is Large ribosomal subunit protein bL32 from Lactococcus lactis subsp. cremoris (strain MG1363).